Consider the following 654-residue polypeptide: Broad substrate specificity ATP-binding cassette transporter ABCG2 (654 aa).

Over 1-394 the chain is Cytoplasmic; the sequence is MSSSNVEVFI…KNLLGNPQAS (394 aa). The region spanning 37–286 is the ABC transporter domain; the sequence is LSFHNICYRV…FESAGYHCEA (250 aa). ATP is bound by residues 80–87, 184–190, glutamate 211, and histidine 243; these read GPTGGGKS and RGVSGGE. The 263-residue stretch at 388–650 folds into the ABC transmembrane type-2 domain; sequence LGNPQASIAQ…TIAYLKLLFL (263 aa). A helical transmembrane segment spans residues 395-415; the sequence is IAQIIVTVILGLVIGAIYFGL. The Extracellular portion of the chain corresponds to 416 to 427; sequence NNDSTGIQNRAG. N-linked (GlcNAc...) asparagine glycosylation is present at asparagine 417. A helical transmembrane segment spans residues 428 to 448; it reads VLFFLTTNQCFSSVSAVELFV. The Cytoplasmic segment spans residues 449 to 476; the sequence is VEKKLFIHEYISGYYRVSSYFFGKLLSD. The helical transmembrane segment at 477–497 threads the bilayer; it reads LLPMRMLPSIIFTCIVYFMLG. Residues 498-505 lie on the Extracellular side of the membrane; sequence LKPTADAF. Residues 506–526 traverse the membrane as a helical segment; the sequence is FIMMFTLMMVAYSASSMALAI. Residues 527–534 lie on the Cytoplasmic side of the membrane; the sequence is AAGQSVVS. Residues 535–555 form a helical membrane-spanning segment; sequence VATLLMTICFVFMMIFSGLLV. N-linked (GlcNAc...) asparagine glycans are attached at residues asparagine 556, asparagine 595, and asparagine 599. Topologically, residues 556 to 629 are extracellular; it reads NLTTIASWLS…LSPWGLWKNH (74 aa). Cysteine 591 and cysteine 607 are disulfide-bonded. Residues 630–650 traverse the membrane as a helical segment; that stretch reads VALACMIVIFLTIAYLKLLFL. The Cytoplasmic segment spans residues 651–654; it reads KKYS.

It belongs to the ABC transporter superfamily. ABCG family. Eye pigment precursor importer (TC 3.A.1.204) subfamily. As to quaternary structure, homodimer; disulfide-linked. The minimal functional unit is a homodimer, but the major oligomeric form in plasma membrane is a homotetramer with possibility of higher order oligomerization up to homododecamers. In terms of processing, N-glycosylated. Glycosylation-deficient ABCG2 is normally expressed and functional. Post-translationally, phosphorylated. Phosphorylation may regulate the localization to the plasma membrane, the homooligomerization and therefore, the activity of the transporter.

Its subcellular location is the cell membrane. The protein localises to the apical cell membrane. It localises to the mitochondrion membrane. The enzyme catalyses ATP + H2O + xenobioticSide 1 = ADP + phosphate + xenobioticSide 2.. The catalysed reaction is urate(in) + ATP + H2O = urate(out) + ADP + phosphate + H(+). It carries out the reaction indoxyl sulfate(in) + ATP + H2O = indoxyl sulfate(out) + ADP + phosphate + H(+). It catalyses the reaction sphing-4-enine 1-phosphate(in) + ATP + H2O = sphing-4-enine 1-phosphate(out) + ADP + phosphate + H(+). The enzyme catalyses estrone 3-sulfate(in) + ATP + H2O = estrone 3-sulfate(out) + ADP + phosphate + H(+). The catalysed reaction is dehydroepiandrosterone 3-sulfate(in) + ATP + H2O = dehydroepiandrosterone 3-sulfate(out) + ADP + phosphate + H(+). It carries out the reaction 4-methylumbelliferone sulfate(in) + ATP + H2O = 4-methylumbelliferone sulfate(out) + ADP + phosphate + H(+). It catalyses the reaction 5,7-dimethyl-2-methylamino-4-(3-pyridylmethyl)-1,3-benzothiazol-6-yl beta-D-glucuronate(in) + ATP + H2O = 5,7-dimethyl-2-methylamino-4-(3-pyridylmethyl)-1,3-benzothiazol-6-yl beta-D-glucuronate(out) + ADP + phosphate + H(+). The enzyme catalyses 4-methylumbelliferone beta-D-glucuronate(in) + ATP + H2O = 4-methylumbelliferone beta-D-glucuronate(out) + ADP + phosphate + H(+). The catalysed reaction is 5,7-dimethyl-2-methylamino-4-(3-pyridylmethyl)-1,3-benzothiazol-6-yl sulfate(in) + ATP + H2O = 5,7-dimethyl-2-methylamino-4-(3-pyridylmethyl)-1,3-benzothiazol-6-yl sulfate(out) + ADP + phosphate + H(+). It carries out the reaction 17beta-estradiol 17-O-(beta-D-glucuronate)(in) + ATP + H2O = 17beta-estradiol 17-O-(beta-D-glucuronate)(out) + ADP + phosphate + H(+). It catalyses the reaction methotrexate(in) + ATP + H2O = methotrexate(out) + ADP + phosphate + H(+). The enzyme catalyses riboflavin(in) + ATP + H2O = riboflavin(out) + ADP + phosphate + H(+). The catalysed reaction is pheophorbide a(in) + ATP + H2O = pheophorbide a(out) + ADP + phosphate + H(+). It carries out the reaction itaconate(in) + ATP + H2O = itaconate(out) + ADP + phosphate + H(+). Broad substrate specificity ATP-dependent transporter of the ATP-binding cassette (ABC) family that actively extrudes a wide variety of physiological compounds, dietary toxins and xenobiotics from cells. Involved in porphyrin homeostasis, mediating the export of protoporphyrin IX (PPIX) from both mitochondria to cytosol and cytosol to extracellular space, it also functions in the cellular export of heme. Also mediates the efflux of sphingosine-1-P from cells. Acts as a urate exporter functioning in both renal and extrarenal urate excretion. In kidney, it also functions as a physiological exporter of the uremic toxin indoxyl sulfate. Also involved in the excretion of steroids like estrone 3-sulfate/E1S, 3beta-sulfooxy-androst-5-en-17-one/DHEAS, and other sulfate conjugates. Mediates the secretion of the riboflavin and biotin vitamins into milk. Extrudes pheophorbide a, a phototoxic porphyrin catabolite of chlorophyll, reducing its bioavailability. Plays an important role in the exclusion of xenobiotics from the brain. It confers to cells a resistance to multiple drugs and other xenobiotics including mitoxantrone, pheophorbide, camptothecin, methotrexate, azidothymidine, and the anthracyclines daunorubicin and doxorubicin, through the control of their efflux. In placenta, it limits the penetration of drugs from the maternal plasma into the fetus. May play a role in early stem cell self-renewal by blocking differentiation. In inflammatory macrophages, exports itaconate from the cytosol to the extracellular compartment and limits the activation of TFEB-dependent lysosome biogenesis involved in antibacterial innate immune response. The polypeptide is Broad substrate specificity ATP-binding cassette transporter ABCG2 (ABCG2) (Macaca mulatta (Rhesus macaque)).